We begin with the raw amino-acid sequence, 72 residues long: Gene 35 protein (72 aa).

The polypeptide is Gene 35 protein (35) (Mycobacterium phage L5 (Mycobacteriophage L5)).